We begin with the raw amino-acid sequence, 309 residues long: Partitioning defective protein 6 (309 aa).

The PB1 domain maps to 14–96; it reads TLQVKSKFDS…PLLRLLIQRR (83 aa). The Pseudo-CRIB domain maps to 132-149; the sequence is ISNPEDFRQVSAIIDVDI. One can recognise a PDZ domain in the interval 156 to 249; sequence RVRLCKHGQE…NLIITVKPAN (94 aa). Over residues 249-270 the composition is skewed to polar residues; sequence NQRNTLSRGPSQQGTPNASEMS. A disordered region spans residues 249–309; that stretch reads NQRNTLSRGP…DANDSDSGED (61 aa).

Belongs to the PAR6 family. Interacts with par-3, required for its peripheral localization, and with cdc-42, required for the activation of a par-3/par-6/pkc-3 complex. As to expression, colocalized with par-3 at all stages in early embryos, at the anterior cortex of the embryo. Patchy expression observed at the periphery after completion of meiosis I and in meiosis II, which on completion of metaphase II, is restricted to the anterior 85% of embryo length; this decreases to 55% in embryos between prophase and telophase of the first mitosis. During the first cleavage, expression is detected in the advancing furrow. Along with pkc-3, is unable to associate with the apical cortex of cells that lack par-3. Transiently coexpressed and colocalized with par-3 and pkc-3, asymmetrically in the developing somatic gonad, including the spermathecal precursor cells of L4 larvae.

The protein localises to the cytoplasm. It localises to the cell membrane. The protein resides in the cell junction. It is found in the tight junction. Its function is as follows. Necessary for apicobasal and anterior-posterior asymmetries associated with cell adhesion and gastrulation during the first few cell cycles of embryogenesis. Required for localizing/ maintaining par-3 at the cell periphery. Regulates mes-1 expression and/or localization pattern during early embryogenesis. Acts together with par-3 and pkc-3 in maintaining epithelial cell polarity in the distal spermatheca. Plays a role in endosome and Golgi body positioning. The chain is Partitioning defective protein 6 from Caenorhabditis elegans.